Here is a 117-residue protein sequence, read N- to C-terminus: Probable glycerol dehydratase-reactivating factor small subunit (117 aa).

Glu31 is a Mg(2+) binding site.

This sequence belongs to the DdrB/PduH family. As to quaternary structure, member of the GDR complex, probably composed of DhaF(2)/DhaG(2). Mg(2+) is required as a cofactor.

Its function is as follows. Small subunit of the glycerol dehydratase-reactivating factor (GDR), which reactivates suicidally inhibited adenosylcobalamin-dependent glycerol dehydratase. In Citrobacter freundii, this protein is Probable glycerol dehydratase-reactivating factor small subunit.